Here is a 1323-residue protein sequence, read N- to C-terminus: Receptor tyrosine-protein kinase let-23 (1323 aa).

The signal sequence occupies residues 1 to 20 (MRYPPSIGSILLIIPIFLTF). Residues 21-818 (FGNSNAQLWK…DIASRQRKTR (798 aa)) lie on the Extracellular side of the membrane. N-linked (GlcNAc...) asparagine glycosylation is found at Asn91 and Asn169. 11 disulfide bridges follow: Cys220–Cys228, Cys224–Cys236, Cys244–Cys251, Cys248–Cys262, Cys263–Cys271, Cys267–Cys279, Cys282–Cys291, Cys295–Cys322, Cys326–Cys337, Cys341–Cys356, and Cys359–Cys364. The N-linked (GlcNAc...) asparagine glycan is linked to Asn255. Asn376 carries N-linked (GlcNAc...) asparagine glycosylation. Disulfide bonds link Cys520–Cys529, Cys524–Cys537, Cys540–Cys549, Cys553–Cys567, Cys570–Cys577, Cys574–Cys585, Cys588–Cys604, Cys608–Cys620, Cys623–Cys632, Cys627–Cys644, Cys647–Cys660, Cys670–Cys693, Cys696–Cys703, Cys700–Cys715, Cys717–Cys731, Cys735–Cys750, Cys753–Cys763, Cys757–Cys771, Cys774–Cys787, and Cys791–Cys805. N-linked (GlcNAc...) asparagine glycosylation occurs at Asn561. N-linked (GlcNAc...) asparagine glycosylation is present at Asn655. Asn746 is a glycosylation site (N-linked (GlcNAc...) asparagine). An N-linked (GlcNAc...) asparagine glycan is attached at Asn776. A helical membrane pass occupies residues 819–839 (MVIIGSVLFGFAVMFLFILLV). Topologically, residues 840-1323 (YWRCQRIGKK…EEVSQKETCL (484 aa)) are cytoplasmic. A Protein kinase domain is found at 885–1152 (TKLDKKLGAG…EFCKVPQLFL (268 aa)). ATP is bound by residues 891 to 899 (LGAGAFGTV) and Lys919. Residue Asp1010 is the Proton acceptor of the active site. The segment covering 1265–1289 (GQTELSPSNGDYYNQPNTPSSSSGY) has biased composition (polar residues). Residues 1265–1323 (GQTELSPSNGDYYNQPNTPSSSSGYYNEPHLKTKKPETSEEAEAVQYENEEVSQKETCL) are disordered. Positions 1293–1302 (PHLKTKKPET) are enriched in basic and acidic residues. Over residues 1303–1315 (SEEAEAVQYENEE) the composition is skewed to acidic residues.

This sequence belongs to the protein kinase superfamily. Tyr protein kinase family. EGF receptor subfamily. As to expression, expressed in vulval precursor cells (at protein level). Expressed in ALA neurons, 2 ventral head neurons, a single neuron in the tail, pharyngeal-intestinal valve and posterior arcade epithelial cells.

It is found in the apical cell membrane. The protein resides in the basolateral cell membrane. The catalysed reaction is L-tyrosyl-[protein] + ATP = O-phospho-L-tyrosyl-[protein] + ADP + H(+). Its function is as follows. Tyrosine-protein kinase receptor which, upon binding ligand lin-3, activates 2 signaling cascades: the let-60/Ras and MAP kinase signaling pathway and the let-60-independent phospholipase C-mediated Ca(2+) signaling pathway. Each pathway regulates distinct functions. By activating let-60/Ras, regulates larval development, induction of vulva cell precursors during vulva development, male spicule formation and posterior development of the epidermis. Probably by activating phospholipase plc-3 and inositol 1,4,5-trisphosphate receptor itr-1 signaling cascade downstream of ligand lin-3, plays a role in ovulation by promoting ovulatory gonadal sheath cell contractions. Probably by regulating neuronal transmission in ALA neurons, mediates, independently of let-60/Ras, the decrease in pharyngeal pumping and locomotion during the quiescent state that precedes each larval molt, downstream of lin-3 and upstream of plc-3. This is Receptor tyrosine-protein kinase let-23 from Caenorhabditis elegans.